The primary structure comprises 414 residues: L-cysteine:1D-myo-inositol 2-amino-2-deoxy-alpha-D-glucopyranoside ligase (414 aa).

Cys-44 is a Zn(2+) binding site. Residues 44-47 (CGIT), Thr-59, and 82-84 (NIT) each bind L-cysteinyl-5'-AMP. Residues 46–56 (ITPYDSTHLGH) carry the 'HIGH' region motif. Positions 188-193 (ERGGDP) match the 'ERGGDP' region motif. L-cysteinyl-5'-AMP is bound at residue Trp-228. Cys-232 lines the Zn(2+) pocket. Residue 250 to 252 (GSD) participates in L-cysteinyl-5'-AMP binding. Position 257 (His-257) interacts with Zn(2+). Ile-284 serves as a coordination point for L-cysteinyl-5'-AMP. The short motif at 290 to 294 (KMSKS) is the 'KMSKS' region element.

Belongs to the class-I aminoacyl-tRNA synthetase family. MshC subfamily. Monomer. It depends on Zn(2+) as a cofactor.

The catalysed reaction is 1D-myo-inositol 2-amino-2-deoxy-alpha-D-glucopyranoside + L-cysteine + ATP = 1D-myo-inositol 2-(L-cysteinylamino)-2-deoxy-alpha-D-glucopyranoside + AMP + diphosphate + H(+). Functionally, catalyzes the ATP-dependent condensation of GlcN-Ins and L-cysteine to form L-Cys-GlcN-Ins. This chain is L-cysteine:1D-myo-inositol 2-amino-2-deoxy-alpha-D-glucopyranoside ligase, found in Corynebacterium aurimucosum (strain ATCC 700975 / DSM 44827 / CIP 107346 / CN-1) (Corynebacterium nigricans).